We begin with the raw amino-acid sequence, 151 residues long: HTH-type transcriptional regulator TcaR (151 aa).

The 142-residue stretch at 1 to 142 folds into the HTH marR-type domain; that stretch reads MVKHLQDHIQ…VRQVLEVINH (142 aa). Positions 54-77 form a DNA-binding region, H-T-H motif; the sequence is ISEITQRQGVNKAAVSRRIKKLID.

In terms of biological role, involved in the antibiotic teicoplanin susceptibility. Inactivation of the tcaRAB operon leads to teicoplanin resistance. Is a weak negative regulator of transcription of the icaABD operon. The chain is HTH-type transcriptional regulator TcaR (tcaR) from Staphylococcus aureus (strain COL).